Reading from the N-terminus, the 491-residue chain is Glutamate--tRNA ligase (491 aa).

Residues 13–23 (PSPTGFLHIGN) carry the 'HIGH' region motif. Residues Cys110, Cys112, Cys137, and His139 each coordinate Zn(2+). Residues 254-258 (KLSKR) carry the 'KMSKS' region motif. Position 257 (Lys257) interacts with ATP.

It belongs to the class-I aminoacyl-tRNA synthetase family. Glutamate--tRNA ligase type 1 subfamily. Monomer. The cofactor is Zn(2+).

Its subcellular location is the cytoplasm. The enzyme catalyses tRNA(Glu) + L-glutamate + ATP = L-glutamyl-tRNA(Glu) + AMP + diphosphate. Catalyzes the attachment of glutamate to tRNA(Glu) in a two-step reaction: glutamate is first activated by ATP to form Glu-AMP and then transferred to the acceptor end of tRNA(Glu). The polypeptide is Glutamate--tRNA ligase (Listeria innocua serovar 6a (strain ATCC BAA-680 / CLIP 11262)).